Here is a 328-residue protein sequence, read N- to C-terminus: Sin3 histone deacetylase corepressor complex component SDS3 (328 aa).

The segment at 1–64 is disordered; the sequence is MSAAALLAPA…TDLAKHDEED (64 aa). An N-acetylserine modification is found at Ser-2. The segment at 2–170 is mediates interaction with USP17L2; it reads SAAALLAPAP…IENEKLTMEL (169 aa). Residues 10–21 are compositionally biased toward pro residues; that stretch reads APAPAGAPPAPE. 2 stretches are compositionally biased toward acidic residues: residues 23–37 and 45–54; these read YPEEDEELESAEDDE and SDEDTEDASE. Phosphoserine occurs at positions 32 and 45. Thr-49 is modified (phosphothreonine). The residue at position 53 (Ser-53) is a Phosphoserine. Positions 64–171 form a coiled coil; that stretch reads DFVEMKEQMY…ENEKLTMELT (108 aa). Glycyl lysine isopeptide (Lys-Gly) (interchain with G-Cter in SUMO2) cross-links involve residues Lys-69, Lys-178, and Lys-201. Residues 226-252 are disordered; sequence LKSPKRPASPSSPEHLPTTPAESPAQR. A phosphoserine mark is found at Ser-228, Ser-234, and Ser-237. The residue at position 244 (Thr-244) is a Phosphothreonine.

It belongs to the SDS3 family. In terms of assembly, homodimer. Component of the SIN3 histone deacetylase (HDAC) corepressor complex. Interacts with SIN3A. Interaction with SIN3B enhances the interaction between SIN3B and HDAC1 to form a complex. Interacts with HCFC1. Component of a mSin3A corepressor complex that contains SIN3A, SAP130, SUDS3/SAP45, ARID4B/SAP180, HDAC1 and HDAC2. Interacts with USP17L2; the interaction is direct. Interacts with FOXK2. In terms of processing, polyubiquitinated. 'Lys-63'-polyubiquitinated SUDS3 positively regulates histone deacetylation. Regulated through deubiquitination by USP17L2/USP17 that cleaves 'Lys-63'-linked ubiquitin chains.

It localises to the nucleus. Regulatory protein which represses transcription and augments histone deacetylase activity of HDAC1. May have a potential role in tumor suppressor pathways through regulation of apoptosis. May function in the assembly and/or enzymatic activity of the mSin3A corepressor complex or in mediating interactions between the complex and other regulatory complexes. The protein is Sin3 histone deacetylase corepressor complex component SDS3 (SUDS3) of Bos taurus (Bovine).